A 232-amino-acid polypeptide reads, in one-letter code: Phosphoglycolate phosphatase (232 aa).

The active-site Nucleophile is aspartate 8. Mg(2+)-binding residues include aspartate 8 and aspartate 10. Lysine 156 contributes to the substrate binding site. Positions 179 and 183 each coordinate Mg(2+).

This sequence belongs to the archaeal SPP-like hydrolase family. It depends on Mg(2+) as a cofactor.

It carries out the reaction 2-phosphoglycolate + H2O = glycolate + phosphate. Functionally, catalyzes the dephosphorylation of 2-phosphoglycolate. This Methanopyrus kandleri (strain AV19 / DSM 6324 / JCM 9639 / NBRC 100938) protein is Phosphoglycolate phosphatase.